The following is a 360-amino-acid chain: uncharacterized protein (360 aa).

A compositionally biased stretch (acidic residues) spans 22–32 (EEDVEPNEEAE). The interval 22–55 (EEDVEPNEEAEGPGGVHKKRRGARKKNRRQRMEG) is disordered. The segment covering 37–50 (VHKKRRGARKKNRR) has biased composition (basic residues).

This is an uncharacterized protein from Caenorhabditis elegans.